Consider the following 556-residue polypeptide: Zinc finger protein 18 (556 aa).

Residues 41 to 123 (RQLFRQFRYQ…TLVESLKGEP (83 aa)) enclose the SCAN box domain. Residues 169-195 (QDLPLQNSSSATGELLSHGVKEESDME) are disordered. The KRAB domain maps to 218–291 (ELGTAVLPPL…HLHGAEKMAR (74 aa)). 5 C2H2-type zinc fingers span residues 415–437 (PTCRECGKTFYRNSQLVFHQRTH), 443–465 (FHCHICKKAFLRSSDFVKHQRTH), 471–493 (CKCDYCGKGFSDFSGLRHHEKIH), 499–521 (YKCPLCEKSFIQRSNFNRHQRVH), and 527–549 (YKCTHCGKQFSWSSSLDKHQRSH).

The protein belongs to the krueppel C2H2-type zinc-finger protein family.

The protein localises to the nucleus. Functionally, may be involved in transcriptional regulation. This chain is Zinc finger protein 18 (Znf18), found in Mus musculus (Mouse).